Here is a 276-residue protein sequence, read N- to C-terminus: Transmembrane protein 53 (276 aa).

Residues 170–190 (LLLLAAFALVVILFHFLLAPF) traverse the membrane as a helical segment.

It belongs to the TMEM53 family. In terms of tissue distribution, expressed in liver (at protein level).

The protein localises to the nucleus outer membrane. Negatively regulates bone morphogenetic protein (BMP) signaling in osteoblast lineage cells by blocking cytoplasm-nucleus translocation of phosphorylated SMAD1/5/9 proteins. The chain is Transmembrane protein 53 (Tmem53) from Mus musculus (Mouse).